Consider the following 233-residue polypeptide: Glycerol-3-phosphate acyltransferase (233 aa).

The next 5 membrane-spanning stretches (helical) occupy residues 7-27, 94-114, 127-147, 153-173, and 185-205; these read WIIIAIICSYLIGAIPFGYII, ISIVFGAAAAIGHIKSIYIGF, VIAINPIIGLSGIGLFFIVAF, SIGSVVASFSVAVMMWIGVLI, and ISYESQIINLVAISLIVLLII.

It belongs to the PlsY family. In terms of assembly, probably interacts with PlsX.

It localises to the cell membrane. It carries out the reaction an acyl phosphate + sn-glycerol 3-phosphate = a 1-acyl-sn-glycero-3-phosphate + phosphate. It participates in lipid metabolism; phospholipid metabolism. Catalyzes the transfer of an acyl group from acyl-phosphate (acyl-PO(4)) to glycerol-3-phosphate (G3P) to form lysophosphatidic acid (LPA). This enzyme utilizes acyl-phosphate as fatty acyl donor, but not acyl-CoA or acyl-ACP. This is Glycerol-3-phosphate acyltransferase from Acholeplasma laidlawii.